We begin with the raw amino-acid sequence, 95 residues long: Bombyxin F-1 (95 aa).

A signal peptide spans 1-19 (MKLVVIVLLVISVSILVSA). 3 disulfide bridges follow: Cys29/Cys82, Cys41/Cys95, and Cys81/Cys86. Residues 53–71 (NSDMVYEDSGMPELLPADT) constitute a propeptide, c peptide like.

It belongs to the insulin family. As to quaternary structure, heterodimer of a B chain and an A chain linked by two disulfide bonds.

Its subcellular location is the secreted. This is Bombyxin F-1 (BBXF1) from Bombyx mori (Silk moth).